The sequence spans 156 residues: ATP synthase subunit b (156 aa).

The chain crosses the membrane as a helical span at residues 4 to 26 (GATFWGPMISFALFVWFTMKFVW).

Belongs to the ATPase B chain family. F-type ATPases have 2 components, F(1) - the catalytic core - and F(0) - the membrane proton channel. F(1) has five subunits: alpha(3), beta(3), gamma(1), delta(1), epsilon(1). F(0) has three main subunits: a(1), b(2) and c(10-14). The alpha and beta chains form an alternating ring which encloses part of the gamma chain. F(1) is attached to F(0) by a central stalk formed by the gamma and epsilon chains, while a peripheral stalk is formed by the delta and b chains.

The protein localises to the cell inner membrane. Functionally, f(1)F(0) ATP synthase produces ATP from ADP in the presence of a proton or sodium gradient. F-type ATPases consist of two structural domains, F(1) containing the extramembraneous catalytic core and F(0) containing the membrane proton channel, linked together by a central stalk and a peripheral stalk. During catalysis, ATP synthesis in the catalytic domain of F(1) is coupled via a rotary mechanism of the central stalk subunits to proton translocation. In terms of biological role, component of the F(0) channel, it forms part of the peripheral stalk, linking F(1) to F(0). The chain is ATP synthase subunit b from Halorhodospira halophila (strain DSM 244 / SL1) (Ectothiorhodospira halophila (strain DSM 244 / SL1)).